The sequence spans 273 residues: Octanoyltransferase LipM (273 aa).

The 209-residue stretch at 32–240 folds into the BPL/LPL catalytic domain; the sequence is GEIPPTLRFY…GFSEILNIEL (209 aa). Residue C142 is the Acyl-thioester intermediate of the active site.

Belongs to the octanoyltransferase LipM family. Monomer.

It catalyses the reaction octanoyl-[ACP] + L-lysyl-[protein] = N(6)-octanoyl-L-lysyl-[protein] + holo-[ACP] + H(+). It functions in the pathway protein modification; protein lipoylation via endogenous pathway; protein N(6)-(lipoyl)lysine from octanoyl-[acyl-carrier-protein]. Functionally, catalyzes the transfer of endogenously produced octanoic acid from octanoyl-acyl-carrier-protein onto the lipoyl domain of GcvH, an intermediate carrier during protein lipoylation. The protein is Octanoyltransferase LipM of Oceanobacillus iheyensis (strain DSM 14371 / CIP 107618 / JCM 11309 / KCTC 3954 / HTE831).